We begin with the raw amino-acid sequence, 302 residues long: Deubiquitinase OTUD6B (302 aa).

Residues 1 to 10 (MEGSEDEEAE) are compositionally biased toward acidic residues. Disordered regions lie at residues 1–52 (MEGS…KQLA) and 99–121 (EQQI…AALE). The span at 106–116 (RISKAQKRREK) shows a compositional bias: basic residues. The 138-residue stretch at 156–293 (LEIKQIPSDG…GEHYNSVKLL (138 aa)) folds into the OTU domain. The segment at 161-167 (IPSDGHC) is cys-loop. The active site involves Asp-164. Cys-167 (nucleophile) is an active-site residue. A variable-loop region spans residues 228–238 (IANTAAWGGQL). The segment at 276-286 (YMRHAYGLGEH) is his-loop. The active site involves His-286.

It catalyses the reaction Thiol-dependent hydrolysis of ester, thioester, amide, peptide and isopeptide bonds formed by the C-terminal Gly of ubiquitin (a 76-residue protein attached to proteins as an intracellular targeting signal).. Deubiquitinating enzyme that may play a role in the ubiquitin-dependent regulation of different cellular processes. The chain is Deubiquitinase OTUD6B (OTUD6B) from Gallus gallus (Chicken).